A 186-amino-acid chain; its full sequence is Ribosome-recycling factor (186 aa).

A disordered region spans residues Glu-144 to Lys-163.

Belongs to the RRF family.

The protein localises to the cytoplasm. Its function is as follows. Responsible for the release of ribosomes from messenger RNA at the termination of protein biosynthesis. May increase the efficiency of translation by recycling ribosomes from one round of translation to another. This Rhizobium johnstonii (strain DSM 114642 / LMG 32736 / 3841) (Rhizobium leguminosarum bv. viciae) protein is Ribosome-recycling factor.